The chain runs to 550 residues: Chaperonin GroEL (550 aa).

ATP contacts are provided by residues 29-32 (TAGP), K50, 86-90 (DGTTT), G417, and D499.

This sequence belongs to the chaperonin (HSP60) family. As to quaternary structure, forms a cylinder of 14 subunits composed of two heptameric rings stacked back-to-back. Interacts with the co-chaperonin GroES.

Its subcellular location is the cytoplasm. The enzyme catalyses ATP + H2O + a folded polypeptide = ADP + phosphate + an unfolded polypeptide.. Functionally, together with its co-chaperonin GroES, plays an essential role in assisting protein folding. The GroEL-GroES system forms a nano-cage that allows encapsulation of the non-native substrate proteins and provides a physical environment optimized to promote and accelerate protein folding. The sequence is that of Chaperonin GroEL from Ehrlichia chaffeensis.